The chain runs to 123 residues: Ribonuclease P protein component (123 aa).

The protein belongs to the RnpA family. As to quaternary structure, consists of a catalytic RNA component (M1 or rnpB) and a protein subunit.

It carries out the reaction Endonucleolytic cleavage of RNA, removing 5'-extranucleotides from tRNA precursor.. RNaseP catalyzes the removal of the 5'-leader sequence from pre-tRNA to produce the mature 5'-terminus. It can also cleave other RNA substrates such as 4.5S RNA. The protein component plays an auxiliary but essential role in vivo by binding to the 5'-leader sequence and broadening the substrate specificity of the ribozyme. The chain is Ribonuclease P protein component from Bordetella bronchiseptica (strain ATCC BAA-588 / NCTC 13252 / RB50) (Alcaligenes bronchisepticus).